The sequence spans 367 residues: Phosphoribosylaminoimidazole-succinocarboxamide synthase (367 aa).

This sequence belongs to the SAICAR synthetase family.

The enzyme catalyses 5-amino-1-(5-phospho-D-ribosyl)imidazole-4-carboxylate + L-aspartate + ATP = (2S)-2-[5-amino-1-(5-phospho-beta-D-ribosyl)imidazole-4-carboxamido]succinate + ADP + phosphate + 2 H(+). It participates in purine metabolism; IMP biosynthesis via de novo pathway; 5-amino-1-(5-phospho-D-ribosyl)imidazole-4-carboxamide from 5-amino-1-(5-phospho-D-ribosyl)imidazole-4-carboxylate: step 1/2. This Shewanella halifaxensis (strain HAW-EB4) protein is Phosphoribosylaminoimidazole-succinocarboxamide synthase.